The sequence spans 181 residues: ATP-dependent protease subunit HslV (181 aa).

T7 is a catalytic residue. A166, C169, and T172 together coordinate Na(+).

It belongs to the peptidase T1B family. HslV subfamily. As to quaternary structure, a double ring-shaped homohexamer of HslV is capped on each side by a ring-shaped HslU homohexamer. The assembly of the HslU/HslV complex is dependent on binding of ATP.

The protein localises to the cytoplasm. The catalysed reaction is ATP-dependent cleavage of peptide bonds with broad specificity.. Allosterically activated by HslU binding. Functionally, protease subunit of a proteasome-like degradation complex believed to be a general protein degrading machinery. The sequence is that of ATP-dependent protease subunit HslV from Anaeromyxobacter sp. (strain Fw109-5).